The following is a 463-amino-acid chain: L-2-hydroxyglutarate dehydrogenase, mitochondrial (463 aa).

Residues 1 to 52 constitute a mitochondrion transit peptide; it reads MVPALRYLGSVCGRARGIFPGGFSAAHTPASGKSRLLCQGGRRASTSSFDIV. N6-acetyllysine occurs at positions 104 and 173.

It belongs to the L2HGDH family. FAD serves as cofactor.

It localises to the mitochondrion. The catalysed reaction is (S)-2-hydroxyglutarate + A = 2-oxoglutarate + AH2. The polypeptide is L-2-hydroxyglutarate dehydrogenase, mitochondrial (L2HGDH) (Bos taurus (Bovine)).